The sequence spans 443 residues: Mimosinase, chloroplastic (443 aa).

The transit peptide at 1–43 (MALSSTFLNPLVSSVAVNPQPKITSGKGFRVNCLIRTQQTVIK) directs the protein to the chloroplast. Pyridoxal 5'-phosphate contacts are provided by tyrosine 105, arginine 107, glycine 135, methionine 136, serine 254, and threonine 256. An N6-(pyridoxal phosphate)lysine modification is found at lysine 257.

This sequence belongs to the trans-sulfuration enzymes family. As to quaternary structure, forms homodimers. May form homotetramers from two homodimers. Pyridoxal 5'-phosphate is required as a cofactor.

The protein resides in the plastid. It localises to the chloroplast. It carries out the reaction L-mimosine + H2O = 3-hydroxy-4H-pyrid-4-one + pyruvate + NH4(+). Its function is as follows. Catalyzes the degradation of mimosine, which is a toxic secondary metabolite found in all Leucaena and Mimosa species. The chain is Mimosinase, chloroplastic from Leucaena leucocephala (White popinac).